The sequence spans 154 residues: Interleukin-2 (154 aa).

The N-terminal stretch at 1-20 (MYRMQLLSCIALSLALVTNS) is a signal peptide. Threonine 23 carries O-linked (GalNAc...) threonine glycosylation. A disulfide bridge links cysteine 78 with cysteine 126.

It belongs to the IL-2 family.

The protein localises to the secreted. In terms of biological role, cytokine produced by activated CD4-positive helper T-cells and to a lesser extend activated CD8-positive T-cells and natural killer (NK) cells that plays pivotal roles in the immune response and tolerance. Binds to a receptor complex composed of either the high-affinity trimeric IL-2R (IL2RA/CD25, IL2RB/CD122 and IL2RG/CD132) or the low-affinity dimeric IL-2R (IL2RB and IL2RG). Interaction with the receptor leads to oligomerization and conformation changes in the IL-2R subunits resulting in downstream signaling starting with phosphorylation of JAK1 and JAK3. In turn, JAK1 and JAK3 phosphorylate the receptor to form a docking site leading to the phosphorylation of several substrates including STAT5. This process leads to activation of several pathways including STAT, phosphoinositide-3-kinase/PI3K and mitogen-activated protein kinase/MAPK pathways. Functions as a T-cell growth factor and can increase NK-cell cytolytic activity as well. Promotes strong proliferation of activated B-cells and subsequently immunoglobulin production. Plays a pivotal role in regulating the adaptive immune system by controlling the survival and proliferation of regulatory T-cells, which are required for the maintenance of immune tolerance. Moreover, participates in the differentiation and homeostasis of effector T-cell subsets, including Th1, Th2, Th17 as well as memory CD8-positive T-cells. This chain is Interleukin-2 (IL2), found in Papio anubis (Olive baboon).